The sequence spans 278 residues: Transcriptional regulator ICP22 homolog (278 aa).

Disordered regions lie at residues 1 to 42 (MFCT…RDTS) and 154 to 229 (CDVS…KRPQ). The segment at 1-142 (MFCTSPATRG…PRGEDGFIEA (142 aa)) is IE62-binding. 2 stretches are compositionally biased toward acidic residues: residues 155 to 169 (DVSD…DDDG) and 183 to 205 (AESS…DSCE).

The protein belongs to the herpesviridae ICP22 family. As to quaternary structure, interacts with IE62; this interaction modulates the function of IE62. Interacts with several components of host pre-initiation complex including GTF2E1, GTF2H2 and POLR2A; these interactions lead to repression of gene transcription. Interacts with host ASF1A; altering its ability to bind histones. Phosphorylated in vitro by host and by protein kinase ORF47.

The protein resides in the host cytoplasm. Its subcellular location is the host nucleus. It is found in the virion tegument. In terms of biological role, immediate early (EI) protein that functions as a transcriptional regulator of cellular and viral mRNAs mainly by interacting with several general transcription factors thereby disorganizing the preinitiation complex at certain promoters. May additionally help to regulate levels of histones in virus-infected cells by interacting with host ASF1. By inhibiting host transcriptional program, IE63 plays a major role in the ability of VZV to overcome the innate immune response to the virus. The chain is Transcriptional regulator ICP22 homolog from Varicella-zoster virus (strain Dumas) (HHV-3).